Here is a 362-residue protein sequence, read N- to C-terminus: GDSL esterase/lipase At5g18430 (362 aa).

The N-terminal stretch at 1-19 (MTISTVIAFMSMFLVFVMS) is a signal peptide. Ser35 serves as the catalytic Nucleophile. The N-linked (GlcNAc...) asparagine glycan is linked to Asn117. Active-site residues include Asp327 and His330. The N-linked (GlcNAc...) asparagine glycan is linked to Asn355.

It belongs to the 'GDSL' lipolytic enzyme family.

The protein localises to the secreted. This is GDSL esterase/lipase At5g18430 from Arabidopsis thaliana (Mouse-ear cress).